Here is a 2241-residue protein sequence, read N- to C-terminus: Little elongation complex subunit 1 (2241 aa).

Positions 22-185 form a coiled coil; sequence CASLQQNLNE…KQKNEKELRH (164 aa). Basic and acidic residues-rich tracts occupy residues 222–233 and 296–315; these read GEGGRRIPEKPA and AFCE…DGNR. Disordered regions lie at residues 222 to 255, 273 to 315, and 368 to 387; these read GEGG…GGPA, GDFS…DGNR, and GEFT…SMES. Serine 523 carries the phosphoserine modification. Residues 552–590 are disordered; that stretch reads EFSKRTLTDGSASKSPCVTGSGRFQRRERDVRESTPQSG. The segment covering 559 to 569 has biased composition (polar residues); the sequence is TDGSASKSPCV. Serine 676 carries the post-translational modification Phosphoserine. The interval 703–817 is disordered; sequence TAKGHSLPQS…PSGESTIPPE (115 aa). The segment covering 718-728 has biased composition (gly residues); the sequence is TGGGQCKGRGP. Residues 738 to 760 show a composition bias toward polar residues; sequence DWTSLARSQAGFTRRSSGSADST. Threonine 803 is modified (phosphothreonine). Serine 896 carries the phosphoserine modification. The interval 971 to 1119 is disordered; the sequence is SGVTSGVFPA…VGEAGHPSDV (149 aa). The segment covering 1065-1074 has biased composition (acidic residues); the sequence is EEDTEVEDEA. Over residues 1091 to 1104 the composition is skewed to basic and acidic residues; it reads RQQEQAEDSHRPLG. N6-acetyllysine is present on lysine 1189. Disordered stretches follow at residues 1231-1328, 1419-1475, and 1543-1671; these read SDVL…CLSI, ASSQ…KSRL, and VHLN…AAAS. Basic and acidic residues predominate over residues 1252–1266; it reads DTEHALLESTHHSQA. Over residues 1460–1470 the composition is skewed to polar residues; sequence DISSNGQSANF. Phosphoserine is present on residues serine 1553 and serine 1582. Polar residues predominate over residues 1574 to 1585; sequence DRSTPTNCSPDT. Over residues 1595–1606 the composition is skewed to pro residues; sequence PPLPPLLPPLIA. The residue at position 1607 (threonine 1607) is a Phosphothreonine. Phosphoserine is present on residues serine 1657, serine 1662, serine 1664, serine 1666, and serine 1677. 2 disordered regions span residues 1777–1800 and 1812–1843; these read GSSG…AGGK and KRLR…GSPL. Positions 1781–1794 are enriched in polar residues; that stretch reads ADGSQGKSQDSGVQ. A compositionally biased stretch (basic and acidic residues) spans 1814-1829; the sequence is LRLDNKSPEPDTREVT. The residue at position 1820 (serine 1820) is a Phosphoserine.

The protein belongs to the ICE1 family. As to quaternary structure, component of the little elongation complex (LEC), at least composed of ELL (ELL, ELL2 or ELL3), ZC3H8, ICE1 and ICE2. Interacts (via N-terminus domain) with ELL. Interacts (via C-terminus domain) with ICE2 and ZC3H8.

Its subcellular location is the nucleus. It localises to the cajal body. Its function is as follows. Component of the little elongation complex (LEC), a complex required to regulate small nuclear RNA (snRNA) gene transcription by RNA polymerase II and III. Specifically acts as a scaffold protein that promotes the LEC complex formation and recruitment and RNA polymerase II occupancy at snRNA genes in subnuclear bodies. The sequence is that of Little elongation complex subunit 1 (Ice1) from Mus musculus (Mouse).